We begin with the raw amino-acid sequence, 325 residues long: Dehydrogenase/reductase SDR family member 7B (325 aa).

Residues 1–17 (MISPSSRKGMLKERAMD) are Cytoplasmic-facing. The helical; Signal-anchor for type II membrane protein transmembrane segment at 18–38 (LVTQTTILPLLFGCLGIFSLF) threads the bilayer. The Lumenal portion of the chain corresponds to 39–325 (RLLQRTRSKA…ARKERKSKNS (287 aa)). Ser62 and Leu64 together coordinate NAD(+). A substrate-binding site is contributed by Ser194. Residues Tyr207, Lys211, and Thr242 each contribute to the NAD(+) site. The Proton acceptor role is filled by Tyr207.

The protein belongs to the short-chain dehydrogenases/reductases (SDR) family.

It is found in the endoplasmic reticulum membrane. In terms of biological role, putative oxidoreductase. This is Dehydrogenase/reductase SDR family member 7B (Dhrs7b) from Rattus norvegicus (Rat).